The sequence spans 248 residues: Large ribosomal subunit protein uL1 (248 aa).

It belongs to the universal ribosomal protein uL1 family. As to quaternary structure, part of the 50S ribosomal subunit.

Functionally, binds directly to 23S rRNA. The L1 stalk is quite mobile in the ribosome, and is involved in E site tRNA release. Protein L1 is also a translational repressor protein, it controls the translation of the L11 operon by binding to its mRNA. The polypeptide is Large ribosomal subunit protein uL1 (Orientia tsutsugamushi (strain Boryong) (Rickettsia tsutsugamushi)).